A 159-amino-acid polypeptide reads, in one-letter code: Probable NADH dehydrogenase [ubiquinone] 1 alpha subcomplex subunit 12 (159 aa).

The protein belongs to the complex I NDUFA12 subunit family. In terms of assembly, complex I is composed of at least 49 different subunits.

It is found in the mitochondrion inner membrane. Its function is as follows. Accessory subunit of the mitochondrial membrane respiratory chain NADH dehydrogenase (Complex I), that is believed not to be involved in catalysis. Complex I functions in the transfer of electrons from NADH to the respiratory chain. The immediate electron acceptor for the enzyme is believed to be ubiquinone. This chain is Probable NADH dehydrogenase [ubiquinone] 1 alpha subcomplex subunit 12, found in Arabidopsis thaliana (Mouse-ear cress).